A 64-amino-acid chain; its full sequence is Antimicrobial peptide THP2 (64 aa).

An N-terminal signal peptide occupies residues 1–28; it reads MRILYLLFSLLFLALQVSPGLSSPKRDM. 3 disulfides stabilise this stretch: Cys-31-Cys-57, Cys-36-Cys-51, and Cys-41-Cys-58.

Expressed in circulating heterophil granulocytes and bone marrow (at protein level).

The protein resides in the secreted. Functionally, antibacterial activity against the Gram-positive bacterium Staphylococcus aureus. Lacks antibacterial activity against the Gram-negative bacterium E.coli K-12. The polypeptide is Antimicrobial peptide THP2 (Meleagris gallopavo (Wild turkey)).